The primary structure comprises 196 residues: GTP cyclohydrolase-2 (196 aa).

A GTP-binding site is contributed by 49-53 (RVHSE). Positions 54, 65, and 67 each coordinate Zn(2+). GTP-binding positions include glutamine 70, 92-94 (EGR), and threonine 114. The active-site Proton acceptor is the aspartate 126. Arginine 128 functions as the Nucleophile in the catalytic mechanism. Threonine 149 and lysine 154 together coordinate GTP.

Belongs to the GTP cyclohydrolase II family. In terms of assembly, homodimer. The cofactor is Zn(2+).

The catalysed reaction is GTP + 4 H2O = 2,5-diamino-6-hydroxy-4-(5-phosphoribosylamino)-pyrimidine + formate + 2 phosphate + 3 H(+). Its pathway is cofactor biosynthesis; riboflavin biosynthesis; 5-amino-6-(D-ribitylamino)uracil from GTP: step 1/4. Catalyzes the conversion of GTP to 2,5-diamino-6-ribosylamino-4(3H)-pyrimidinone 5'-phosphate (DARP), formate and pyrophosphate. The sequence is that of GTP cyclohydrolase-2 from Escherichia coli O127:H6 (strain E2348/69 / EPEC).